Here is a 166-residue protein sequence, read N- to C-terminus: Endoribonuclease YbeY (166 aa).

Residues His111, His115, and His121 each contribute to the Zn(2+) site. The tract at residues 140 to 166 (ELGYPDPYADDESADPPHSDTPSKDHE) is disordered. A compositionally biased stretch (basic and acidic residues) spans 154–166 (DPPHSDTPSKDHE).

This sequence belongs to the endoribonuclease YbeY family. The cofactor is Zn(2+).

The protein localises to the cytoplasm. Functionally, single strand-specific metallo-endoribonuclease involved in late-stage 70S ribosome quality control and in maturation of the 3' terminus of the 16S rRNA. The chain is Endoribonuclease YbeY from Pseudomonas syringae pv. syringae (strain B728a).